Reading from the N-terminus, the 464-residue chain is ATP synthase subunit beta (464 aa).

153–160 (GGAGVGKT) is an ATP binding site.

The protein belongs to the ATPase alpha/beta chains family. F-type ATPases have 2 components, CF(1) - the catalytic core - and CF(0) - the membrane proton channel. CF(1) has five subunits: alpha(3), beta(3), gamma(1), delta(1), epsilon(1). CF(0) has three main subunits: a(1), b(2) and c(9-12). The alpha and beta chains form an alternating ring which encloses part of the gamma chain. CF(1) is attached to CF(0) by a central stalk formed by the gamma and epsilon chains, while a peripheral stalk is formed by the delta and b chains.

It is found in the cell inner membrane. It carries out the reaction ATP + H2O + 4 H(+)(in) = ADP + phosphate + 5 H(+)(out). Produces ATP from ADP in the presence of a proton gradient across the membrane. The catalytic sites are hosted primarily by the beta subunits. This Burkholderia ambifaria (strain ATCC BAA-244 / DSM 16087 / CCUG 44356 / LMG 19182 / AMMD) (Burkholderia cepacia (strain AMMD)) protein is ATP synthase subunit beta.